The chain runs to 507 residues: MKKGGGRNKGFPQDDESSISLRQLMVNEGLIPSLEDEVKRRGVINQLRKIVVRWVKNVAWQHRLPQNQIDATNATILPYGSYGLGVYGSESDIDALCIGPFFASIAEDFFISLRDMLKSRREVSELHCVKDAKVPLIRFKFDGILVDLPYAQLRVLSIPNNVDVLNPFFLRDIDETSWKILSGVRANKCILQLVPSLELFQSLLRCVKLWAKRRGVYGNLNGFLGGVHMAILAAFVCGYQPNATLSSLLANFFYTFAHWQWPTPVVLLEDTYPSTGAPPGLMPIQLPCGSHQYCNSTITRSTFYKIVAEFLLGHNLTKDYLKLNFSWKDLFELYPYANTYTWFTKIHLSAANQEDLSDWVGWVKSRFRCLLIKIEEVYGICDPNPTEYVETYTKQPNIVFYWGLQLRTINVSDIESVKIDFLKNVNSGSFRGTVGRIQLTLVKASQLPKNGECGSNNRSKKVTKTCWRIREDKQCNNVPVYSKHLPGYVVGYQKMVNREADGMEVKC.

Residues 79-81, 91-94, Asp147, Lys208, Tyr217, and 226-227 contribute to the ATP site; these read YGS, SDID, and GV. Residues Asp92, Asp94, and Asp147 each contribute to the Mg(2+) site.

It belongs to the poly(A) polymerase family. Monomer. Forms a complex with cleavage and polyadenylation specificity factor (CPSF) subunits FIPS5 and CPSF30. It depends on Mg(2+) as a cofactor. Mn(2+) serves as cofactor. As to expression, expressed in leaves (mostly in petioles and tips), cotyledon, roots (tips, vascular tissue of the radicle, and throughout the root tissue excluding the elongation zone), stems, and flowers (restricted to the stigma and the pollen in mature anthers). Active in the primary and secondary root systems.

The protein localises to the nucleus. It carries out the reaction RNA(n) + ATP = RNA(n)-3'-adenine ribonucleotide + diphosphate. In terms of biological role, essential protein. Polymerase that creates the 3'-poly(A) tail of mRNA's. Also required for the endoribonucleolytic cleavage reaction at some polyadenylation sites. May acquire specificity through interaction with a cleavage and polyadenylation specificity factor (CPSF) at its C-terminus. The sequence is that of Nuclear poly(A) polymerase 3 from Arabidopsis thaliana (Mouse-ear cress).